Reading from the N-terminus, the 189-residue chain is MAVYSTNEFKNGLKVMVDDAPCSILDCEFVKPGKGQAFTRIKIRNLKTGRVVERTFKSGDTLPSADVADVEMQYLYNDGEYWHFMVPDTFEQYAVTENVLADAAQWLKEQDVCVLTLWNNEPIQVTPPNFVILAITETDPGLKGDTSGGGGKPATLETGAVVRVPLFVQTGELIKVDTRKGEYVSRAKE.

An N6-(3,6-diaminohexanoyl)-5-hydroxylysine modification is found at Lys-34.

Belongs to the elongation factor P family. In terms of processing, may be beta-lysylated on the epsilon-amino group of Lys-34 by the combined action of EpmA and EpmB, and then hydroxylated on the C5 position of the same residue by EpmC (if this protein is present). Lysylation is critical for the stimulatory effect of EF-P on peptide-bond formation. The lysylation moiety may extend toward the peptidyltransferase center and stabilize the terminal 3-CCA end of the tRNA. Hydroxylation of the C5 position on Lys-34 may allow additional potential stabilizing hydrogen-bond interactions with the P-tRNA.

It is found in the cytoplasm. Its pathway is protein biosynthesis; polypeptide chain elongation. Involved in peptide bond synthesis. Alleviates ribosome stalling that occurs when 3 or more consecutive Pro residues or the sequence PPG is present in a protein, possibly by augmenting the peptidyl transferase activity of the ribosome. Modification of Lys-34 is required for alleviation. In Legionella pneumophila (strain Paris), this protein is Elongation factor P.